The primary structure comprises 528 residues: Chromosomal replication initiator protein DnaA (528 aa).

The interval 1–104 (MNDDPNALAR…PVDDEPESDP (104 aa)) is domain I, interacts with DnaA modulators. The disordered stretch occupies residues 95-158 (PVDDEPESDP…TDFEEVDDDR (64 aa)). Positions 104-123 (PPSRDHRPEPEPLHTPRHLE) are enriched in basic and acidic residues. The domain II stretch occupies residues 105 to 187 (PSRDHRPEPE…GPAPSATGGN (83 aa)). Acidic residues predominate over residues 149–158 (TDFEEVDDDR). The segment at 188 to 404 (SLNAKYTFDT…GALIRVTAFA (217 aa)) is domain III, AAA+ region. 4 residues coordinate ATP: Gly232, Gly234, Lys235, and Thr236. The domain IV, binds dsDNA stretch occupies residues 405–528 (SLNRQPLDLT…TARIKQRSKR (124 aa)).

The protein belongs to the DnaA family. In terms of assembly, oligomerizes as a right-handed, spiral filament on DNA at oriC.

It localises to the cytoplasm. In terms of biological role, plays an essential role in the initiation and regulation of chromosomal replication. ATP-DnaA binds to the origin of replication (oriC) to initiate formation of the DNA replication initiation complex once per cell cycle. Binds the DnaA box (a 9 base pair repeat at the origin) and separates the double-stranded (ds)DNA. Forms a right-handed helical filament on oriC DNA; dsDNA binds to the exterior of the filament while single-stranded (ss)DNA is stabiized in the filament's interior. The ATP-DnaA-oriC complex binds and stabilizes one strand of the AT-rich DNA unwinding element (DUE), permitting loading of DNA polymerase. After initiation quickly degrades to an ADP-DnaA complex that is not apt for DNA replication. Binds acidic phospholipids. The polypeptide is Chromosomal replication initiator protein DnaA (Rhodococcus jostii (strain RHA1)).